The primary structure comprises 290 residues: uncharacterized protein (290 aa).

Residues 2 to 238 (LKTENLSVGY…EIVNELYDLK (237 aa)) form the ABC transporter domain. Residue 34–41 (GPNGAGKS) participates in ATP binding.

Belongs to the ABC transporter superfamily.

This is an uncharacterized protein from Methanocaldococcus jannaschii (strain ATCC 43067 / DSM 2661 / JAL-1 / JCM 10045 / NBRC 100440) (Methanococcus jannaschii).